Consider the following 434-residue polypeptide: D-inositol 3-phosphate glycosyltransferase (434 aa).

Histidine 19 is a 1D-myo-inositol 3-phosphate binding site. Residues 25–26 and glycine 33 each bind UDP-N-acetyl-alpha-D-glucosamine; that span reads QP. 1D-myo-inositol 3-phosphate-binding positions include 30–35, lysine 88, tyrosine 121, threonine 145, and arginine 165; that span reads DAGGMN. Residues arginine 239, lysine 244, and glutamine 297 each coordinate UDP-N-acetyl-alpha-D-glucosamine. Residues tyrosine 306, arginine 307, and alanine 309 each coordinate Mg(2+). 2 residues coordinate UDP-N-acetyl-alpha-D-glucosamine: glutamate 319 and glutamate 327. Position 333 (threonine 333) interacts with Mg(2+). The tract at residues 414–434 is disordered; that stretch reads HPRPAARRSGRRFSMRRGVRT.

The protein belongs to the glycosyltransferase group 1 family. MshA subfamily. Homodimer.

It carries out the reaction 1D-myo-inositol 3-phosphate + UDP-N-acetyl-alpha-D-glucosamine = 1D-myo-inositol 2-acetamido-2-deoxy-alpha-D-glucopyranoside 3-phosphate + UDP + H(+). Its function is as follows. Catalyzes the transfer of a N-acetyl-glucosamine moiety to 1D-myo-inositol 3-phosphate to produce 1D-myo-inositol 2-acetamido-2-deoxy-glucopyranoside 3-phosphate in the mycothiol biosynthesis pathway. This is D-inositol 3-phosphate glycosyltransferase (mshA) from Mycolicibacterium smegmatis (strain ATCC 700084 / mc(2)155) (Mycobacterium smegmatis).